The following is a 197-amino-acid chain: Probable GTP-binding protein EngB (197 aa).

The region spanning 22-195 is the EngB-type G domain; the sequence is ALPELALVGR…WQWIEERTGV (174 aa). GTP is bound by residues 30–37, 57–61, 75–78, 142–145, and 174–176; these read GRSNVGKS, GKTQT, DVPG, TKVD, and FSA. S37 and T59 together coordinate Mg(2+).

It belongs to the TRAFAC class TrmE-Era-EngA-EngB-Septin-like GTPase superfamily. EngB GTPase family. It depends on Mg(2+) as a cofactor.

Functionally, necessary for normal cell division and for the maintenance of normal septation. This chain is Probable GTP-binding protein EngB, found in Limosilactobacillus fermentum (strain NBRC 3956 / LMG 18251) (Lactobacillus fermentum).